A 332-amino-acid polypeptide reads, in one-letter code: 2-oxoglutarate-dependent dioxygenase FG08081 (332 aa).

The Fe2OG dioxygenase domain occupies 176 to 280 (RSKSTLYFLH…RYSISYFLRA (105 aa)). Fe cation contacts are provided by histidine 201, aspartate 203, and histidine 258. Arginine 271 is a binding site for 2-oxoglutarate.

It belongs to the iron/ascorbate-dependent oxidoreductase family. The cofactor is Fe(2+).

It functions in the pathway mycotoxin biosynthesis. Its function is as follows. 2-oxoglutarate-dependent dioxygenase; part of the gene cluster that mediates the biosynthesis of butenolide, a mycotoxin that shows antibiotic activity but does not seem to play a major role in the spread of head blight in wheat. Butenolide is derived from glutamic acid via a 4-acetamido-2-butenoic acid intermediate. The predicted function of the NADH:flavin oxidoreductase FG08077, the cytochrome P450 monooxygenase FG08079, the decarboxylase FG08083, and the putative acetyltransferase FG08082 are consistent with this pathway, however, the respective activities of the butelonide biosynthesis cluster enzymes have still to be experimentally determined. This Gibberella zeae (strain ATCC MYA-4620 / CBS 123657 / FGSC 9075 / NRRL 31084 / PH-1) (Wheat head blight fungus) protein is 2-oxoglutarate-dependent dioxygenase FG08081.